A 92-amino-acid polypeptide reads, in one-letter code: Small ribosomal subunit protein bS18 (92 aa).

Belongs to the bacterial ribosomal protein bS18 family. Part of the 30S ribosomal subunit. Forms a tight heterodimer with protein bS6.

Binds as a heterodimer with protein bS6 to the central domain of the 16S rRNA, where it helps stabilize the platform of the 30S subunit. The chain is Small ribosomal subunit protein bS18 from Ralstonia nicotianae (strain ATCC BAA-1114 / GMI1000) (Ralstonia solanacearum).